Consider the following 167-residue polypeptide: MSTPARRRLMRDFKRMKEDSPPGVSASPLPDNVMVWNAMIIGPADTPYEDGTFRLLLEFDEDYPNKPPHVKFLSEMFHPNVYANGEICLDILQNRWTPTYDVASILTSIQSLFNDPNPASPANVEAATLFKDHKSQYIKRVKETVEKSWEDNMDDMDDSDEDDEDDE.

The region spanning Pro4–Glu150 is the UBC core domain. Cys88 (glycyl thioester intermediate) is an active-site residue. Positions Ser148–Glu167 are disordered. Over residues Asp151–Glu167 the composition is skewed to acidic residues.

The protein belongs to the ubiquitin-conjugating enzyme family.

The protein localises to the cytoplasm. It is found in the nucleus. It carries out the reaction S-ubiquitinyl-[E1 ubiquitin-activating enzyme]-L-cysteine + [E2 ubiquitin-conjugating enzyme]-L-cysteine = [E1 ubiquitin-activating enzyme]-L-cysteine + S-ubiquitinyl-[E2 ubiquitin-conjugating enzyme]-L-cysteine.. It functions in the pathway protein modification; protein ubiquitination. Functionally, catalyzes the covalent attachment of ubiquitin to other proteins. Plays a role in transcription regulation by catalyzing the monoubiquitination of histone H2B to form H2BK123ub1. H2BK123ub1 gives a specific tag for epigenetic transcriptional activation and is also a prerequisite for H3K4me and H3K79me formation. Also involved in postreplication repair of UV-damaged DNA, in N-end rule-dependent protein degradation and in sporulation. The sequence is that of Ubiquitin-conjugating enzyme E2 2 (UBC2) from Candida glabrata (strain ATCC 2001 / BCRC 20586 / JCM 3761 / NBRC 0622 / NRRL Y-65 / CBS 138) (Yeast).